The following is a 248-amino-acid chain: Probable transcriptional regulatory protein Atu3727 (248 aa).

The segment at 1–21 is disordered; sequence MAGHSQFKNIMHRKGKQDSVR.

Belongs to the TACO1 family.

Its subcellular location is the cytoplasm. The sequence is that of Probable transcriptional regulatory protein Atu3727 from Agrobacterium fabrum (strain C58 / ATCC 33970) (Agrobacterium tumefaciens (strain C58)).